A 164-amino-acid polypeptide reads, in one-letter code: Phosphopantetheine adenylyltransferase (164 aa).

Thr-10 provides a ligand contact to substrate. Residues 10–11 and His-18 each bind ATP; that span reads TF. Lys-42, Leu-74, and Arg-88 together coordinate substrate. Residues 89-91, Glu-99, and 124-130 contribute to the ATP site; these read GIR and YAFVSST.

The protein belongs to the bacterial CoaD family. As to quaternary structure, homohexamer. Mg(2+) serves as cofactor.

The protein resides in the cytoplasm. The enzyme catalyses (R)-4'-phosphopantetheine + ATP + H(+) = 3'-dephospho-CoA + diphosphate. It participates in cofactor biosynthesis; coenzyme A biosynthesis; CoA from (R)-pantothenate: step 4/5. In terms of biological role, reversibly transfers an adenylyl group from ATP to 4'-phosphopantetheine, yielding dephospho-CoA (dPCoA) and pyrophosphate. This chain is Phosphopantetheine adenylyltransferase, found in Tolumonas auensis (strain DSM 9187 / NBRC 110442 / TA 4).